Here is a 63-residue protein sequence, read N- to C-terminus: Conotoxin p5a (63 aa).

A signal peptide spans 1–19; sequence MRCLPVFVILLLLIPSAPC. A propeptide spanning residues 20–50 is cleaved from the precursor; it reads VDAHPKTKDDMPLASFHDNAKGTLQRFWKKR. 2 cysteine pairs are disulfide-bonded: cysteine 52-cysteine 59 and cysteine 53-cysteine 60. A Leucine amide modification is found at leucine 62.

In terms of tissue distribution, expressed by the venom duct.

The protein localises to the secreted. In vivo, low levels of the peptide injected into male specimens of the Siamese fighting fish causes an immediate aggressive display in this fish in response to their reflection when placed in a mirrored aquarium; High levels of the peptide suppressed this behavior. No effect is observed when injected into mice. The protein is Conotoxin p5a of Conus purpurascens (Purple cone).